The following is a 525-amino-acid chain: Bifunctional purine biosynthesis protein PurH (525 aa).

An MGS-like domain is found at 10 to 156 (HRIPIRRALV…KNHPSVAIVT (147 aa)).

Belongs to the PurH family.

The catalysed reaction is (6R)-10-formyltetrahydrofolate + 5-amino-1-(5-phospho-beta-D-ribosyl)imidazole-4-carboxamide = 5-formamido-1-(5-phospho-D-ribosyl)imidazole-4-carboxamide + (6S)-5,6,7,8-tetrahydrofolate. It catalyses the reaction IMP + H2O = 5-formamido-1-(5-phospho-D-ribosyl)imidazole-4-carboxamide. It functions in the pathway purine metabolism; IMP biosynthesis via de novo pathway; 5-formamido-1-(5-phospho-D-ribosyl)imidazole-4-carboxamide from 5-amino-1-(5-phospho-D-ribosyl)imidazole-4-carboxamide (10-formyl THF route): step 1/1. Its pathway is purine metabolism; IMP biosynthesis via de novo pathway; IMP from 5-formamido-1-(5-phospho-D-ribosyl)imidazole-4-carboxamide: step 1/1. This Nocardioides sp. (strain ATCC BAA-499 / JS614) protein is Bifunctional purine biosynthesis protein PurH.